Consider the following 342-residue polypeptide: 4-hydroxy-3-methylbut-2-enyl diphosphate reductase (342 aa).

C47 provides a ligand contact to [4Fe-4S] cluster. The (2E)-4-hydroxy-3-methylbut-2-enyl diphosphate site is built by H78 and H111. Positions 78 and 111 each coordinate dimethylallyl diphosphate. Isopentenyl diphosphate-binding residues include H78 and H111. C133 contributes to the [4Fe-4S] cluster binding site. Position 161 (H161) interacts with (2E)-4-hydroxy-3-methylbut-2-enyl diphosphate. H161 is a dimethylallyl diphosphate binding site. H161 is an isopentenyl diphosphate binding site. Catalysis depends on E163, which acts as the Proton donor. A (2E)-4-hydroxy-3-methylbut-2-enyl diphosphate-binding site is contributed by T201. C231 is a [4Fe-4S] cluster binding site. S259, S260, N261, and S303 together coordinate (2E)-4-hydroxy-3-methylbut-2-enyl diphosphate. Dimethylallyl diphosphate-binding residues include S259, S260, N261, and S303. Isopentenyl diphosphate is bound by residues S259, S260, N261, and S303.

This sequence belongs to the IspH family. The cofactor is [4Fe-4S] cluster.

It catalyses the reaction isopentenyl diphosphate + 2 oxidized [2Fe-2S]-[ferredoxin] + H2O = (2E)-4-hydroxy-3-methylbut-2-enyl diphosphate + 2 reduced [2Fe-2S]-[ferredoxin] + 2 H(+). The catalysed reaction is dimethylallyl diphosphate + 2 oxidized [2Fe-2S]-[ferredoxin] + H2O = (2E)-4-hydroxy-3-methylbut-2-enyl diphosphate + 2 reduced [2Fe-2S]-[ferredoxin] + 2 H(+). The protein operates within isoprenoid biosynthesis; dimethylallyl diphosphate biosynthesis; dimethylallyl diphosphate from (2E)-4-hydroxy-3-methylbutenyl diphosphate: step 1/1. It participates in isoprenoid biosynthesis; isopentenyl diphosphate biosynthesis via DXP pathway; isopentenyl diphosphate from 1-deoxy-D-xylulose 5-phosphate: step 6/6. In terms of biological role, catalyzes the conversion of 1-hydroxy-2-methyl-2-(E)-butenyl 4-diphosphate (HMBPP) into a mixture of isopentenyl diphosphate (IPP) and dimethylallyl diphosphate (DMAPP). Acts in the terminal step of the DOXP/MEP pathway for isoprenoid precursor biosynthesis. The chain is 4-hydroxy-3-methylbut-2-enyl diphosphate reductase from Anaplasma marginale (strain Florida).